The following is a 603-amino-acid chain: MNAAAKAGKLARAPADLGKGGVPGDAVPGAPVAAPLAKEIPEVLVDPRSRRQYVRGRFLGKGGFAKCFEISDADTKEVFAGKIVPKSLLLKPHQKEKMSMEISIHRSLAHQHVVGFHDFFEDSDFVFVVLELCRRRSLLELHKRRKALTEPEARYYLRQIVLGCQYLHRNQVIHRDLKLGNLFLNEDLEVKIGDFGLATKVEYEGERKKTLCGTPNYIAPEVLSKKGHSFEVDVWSIGCIMYTLLVGKPPFETSCLKETYLRIKKNEYSIPKHINPVAASLIQKMLQTDPTARPTIHELLNDEFFTSGYIPARLPITCLTIPPRFSIAPSSLDPSSRKPLKVLNKGVENPLPDRPREKEEPVVRETNEAIECHLSDLLQQLTSVNASKPSERGLVRQEEAEDPACIPIFWVSKWVDYSDKYGLGYQLCDNSVGVLFNDSTRLILYNDGDSLQYIERDGTESYLTVSSHPNSLMKKITLLNYFRNYMSEHLLKAGANITPREGDELARLPYLRTWFRTRSAIILHLSNGTVQINFFQDHTKLILCPLMAAVTYINEKRDFQTYRLSLLEEYGCCKELASRLRYARTMVDKLLSSRSASNRLKAS.

K19 is covalently cross-linked (Glycyl lysine isopeptide (Lys-Gly) (interchain with G-Cter in ubiquitin)). The region spanning 53–305 (YVRGRFLGKG…IHELLNDEFF (253 aa)) is the Protein kinase domain. Residues 59–67 (LGKGGFAKC) and K82 each bind ATP. Position 103 is a phosphoserine (S103). E131 lines the ATP pocket. S137 carries the phosphoserine modification. The Proton acceptor role is filled by D176. ATP is bound by residues 178 to 181 (KLGN) and D194. The segment at 194 to 221 (DFGLATKVEYEGERKKTLCGTPNYIAPE) is activation loop. T210 carries the post-translational modification Phosphothreonine; by AURKA. A Phosphothreonine modification is found at T214. Residues S269 and S335 each carry the phosphoserine; by autocatalysis modification. Positions 337–340 (RKPL) match the D-box that targets the protein for proteasomal degradation in anaphase motif. K338 is covalently cross-linked (Glycyl lysine isopeptide (Lys-Gly) (interchain with G-Cter in SUMO2)). Residues S375 and S450 each carry the phosphoserine modification. The POLO box 1 domain occupies 410-488 (WVSKWVDYSD…LNYFRNYMSE (79 aa)). A Glycyl lysine isopeptide (Lys-Gly) (interchain with G-Cter in ubiquitin) cross-link involves residue K492. Positions 493–507 (AGANITPREGDELAR) are linker. Residue T498 is modified to Phosphothreonine. In terms of domain architecture, POLO box 2 spans 510-592 (YLRTWFRTRS…ARTMVDKLLS (83 aa)). Residues 538–540 (HTK) are important for interaction with phosphorylated proteins.

Belongs to the protein kinase superfamily. Ser/Thr protein kinase family. CDC5/Polo subfamily. Interacts with CEP170 and EVI5. Interacts and phosphorylates ERCC6L. Interacts with FAM29A. Interacts with SLX4/BTBD12 and TTDN1. Interacts with BUB1B. Interacts (via POLO-box domain) with the phosphorylated form of BUB1, CENPU and CDC25C. Interacts with isoform 3 of SGO1. Interacts with BORA, KIF2A and AURKA. Interacts with TOPORS and CYLD. Interacts with ECT2; the interaction is stimulated upon phosphorylation of ECT2 on 'Thr-444'. Interacts with PRC1. Interacts with KIF20A/MKLP2 (when phosphorylated), leading to the recruitment at the central spindle. Interacts (via POLO box domains) with PPP1R12A/MYPT1 (when previously phosphorylated by CDK1). Part of an astrin (SPAG5)-kinastrin (SKAP) complex containing KNSTRN, SPAG5, PLK1, DYNLL1 and SGO2A. Interacts with BIRC6/bruce. Interacts with CDK1-phosphorylated DCTN6 during mitotic prometaphase; the interaction facilitates recruitment to kinetochores. Interacts with CDK1-phosphorylated FRY; this interaction occurs in mitotic cells, but not in interphase cells. FRY interaction facilitates AURKA-mediated PLK1 phosphorylation. Interacts with CEP68; the interaction phosphorylates CEP68. Interacts (via POLO-box domain) with DCTN1. Interacts with CEP20 in later G1, S, G2 and M phases of the cell cycle; this interaction recruits PLK1 to centrosomes, a step required for S phase progression. Interacts with HSF1; this interaction increases upon heat shock but does not modulate neither HSF1 homotrimerization nor DNA-binding activities. Interacts with HNRNPU; this interaction induces phosphorylation of HNRNPU in mitosis. Interacts (via its N-terminus) with RIOK2. Interacts with KLHL22. Interacts (via POLO box domains) with NEDD9/HEF1 (via C-terminus). Interacts (via RVxF motif) with FIRRM; regulates PLK1 kinase activity. Interacts with SKA3; the interaction promotes the stability of PLK1. Interacts with the MTMR3:MTMR4 heterooligomer; brings CEP55 and PLK1 together during early mitosis, regulating the phosphorylation of CEP55 by PLK1 and its recruitment to the midbody where it can mediate cell abscission. Post-translationally, catalytic activity is enhanced by phosphorylation of Thr-210. Phosphorylation at Thr-210 is first detected on centrosomes in the G2 phase of the cell cycle, peaks in prometaphase and gradually disappears from centrosomes during anaphase. Dephosphorylation at Thr-210 at centrosomes is probably mediated by protein phosphatase 1C (PP1C), via interaction with PPP1R12A/MYPT1. Autophosphorylation and phosphorylation of Ser-137 may not be significant for the activation of PLK1 during mitosis, but may enhance catalytic activity during recovery after DNA damage checkpoint. Phosphorylated in vitro by STK10. In terms of processing, ubiquitinated by the anaphase promoting complex/cyclosome (APC/C) in anaphase and following DNA damage, leading to its degradation by the proteasome. Ubiquitination is mediated via its interaction with FZR1/CDH1. Ubiquitination and subsequent degradation prevents entry into mitosis and is essential to maintain an efficient G2 DNA damage checkpoint. Monoubiquitination at Lys-492 by the BCR(KLHL22) ubiquitin ligase complex does not lead to degradation: it promotes PLK1 dissociation from phosphoreceptor proteins and subsequent removal from kinetochores, allowing silencing of the spindle assembly checkpoint (SAC) and chromosome segregation. As to expression, newborn and adult spleen, fetal and newborn kidney, liver, brain, thymus and adult bone marrow, thymus, ovary and testes.

The protein localises to the nucleus. Its subcellular location is the chromosome. The protein resides in the centromere. It localises to the kinetochore. It is found in the cytoplasm. The protein localises to the cytoskeleton. Its subcellular location is the microtubule organizing center. The protein resides in the centrosome. It localises to the spindle. It is found in the midbody. It catalyses the reaction L-seryl-[protein] + ATP = O-phospho-L-seryl-[protein] + ADP + H(+). The enzyme catalyses L-threonyl-[protein] + ATP = O-phospho-L-threonyl-[protein] + ADP + H(+). Activated by phosphorylation of Thr-210 by AURKA; phosphorylation by AURKA is enhanced by BORA. Once activated, activity is stimulated by binding target proteins. Binding of target proteins has no effect on the non-activated kinase. Several inhibitors targeting PLKs are currently in development and are under investigation in a growing number of clinical trials, such as BI 2536, an ATP-competitive PLK1 inhibitor or BI 6727, a dihydropteridinone that specifically inhibits the catalytic activity of PLK1. Serine/threonine-protein kinase that performs several important functions throughout M phase of the cell cycle, including the regulation of centrosome maturation and spindle assembly, the removal of cohesins from chromosome arms, the inactivation of anaphase-promoting complex/cyclosome (APC/C) inhibitors, and the regulation of mitotic exit and cytokinesis. Polo-like kinase proteins act by binding and phosphorylating proteins that are already phosphorylated on a specific motif recognized by the POLO box domains. Phosphorylates BORA, BUB1B/BUBR1, CCNB1, CDC25C, CEP55, ECT2, ERCC6L, FBXO5/EMI1, FOXM1, KIF20A/MKLP2, CENPU, NEDD1, NINL, NPM1, NUDC, PKMYT1/MYT1, KIZ, MRE11, PPP1R12A/MYPT1, POLQ, PRC1, RACGAP1/CYK4, RAD51, RHNO1, SGO1, STAG2/SA2, TEX14, TOPORS, p73/TP73, TPT1, WEE1 and HNRNPU. Plays a key role in centrosome functions and the assembly of bipolar spindles by phosphorylating KIZ, NEDD1 and NINL. NEDD1 phosphorylation promotes subsequent targeting of the gamma-tubulin ring complex (gTuRC) to the centrosome, an important step for spindle formation. Phosphorylation of NINL component of the centrosome leads to NINL dissociation from other centrosomal proteins. Involved in mitosis exit and cytokinesis by phosphorylating CEP55, ECT2, KIF20A/MKLP2, CENPU, PRC1 and RACGAP1. Recruited at the central spindle by phosphorylating and docking PRC1 and KIF20A/MKLP2; creates its own docking sites on PRC1 and KIF20A/MKLP2 by mediating phosphorylation of sites subsequently recognized by the POLO box domains. Phosphorylates RACGAP1, thereby creating a docking site for the Rho GTP exchange factor ECT2 that is essential for the cleavage furrow formation. Promotes the central spindle recruitment of ECT2. Plays a central role in G2/M transition of mitotic cell cycle by phosphorylating CCNB1, CDC25C, FOXM1, CENPU, PKMYT1/MYT1, PPP1R12A/MYPT1 and WEE1. Part of a regulatory circuit that promotes the activation of CDK1 by phosphorylating the positive regulator CDC25C and inhibiting the negative regulators WEE1 and PKMYT1/MYT1. Also acts by mediating phosphorylation of cyclin-B1 (CCNB1) on centrosomes in prophase. Phosphorylates FOXM1, a key mitotic transcription regulator, leading to enhance FOXM1 transcriptional activity. Involved in kinetochore functions and sister chromatid cohesion by phosphorylating BUB1B/BUBR1, FBXO5/EMI1 and STAG2/SA2. PLK1 is high on non-attached kinetochores suggesting a role of PLK1 in kinetochore attachment or in spindle assembly checkpoint (SAC) regulation. Required for kinetochore localization of BUB1B. Regulates the dissociation of cohesin from chromosomes by phosphorylating cohesin subunits such as STAG2/SA2. Phosphorylates SGO1: required for spindle pole localization of isoform 3 of SGO1 and plays a role in regulating its centriole cohesion function. Mediates phosphorylation of FBXO5/EMI1, a negative regulator of the APC/C complex during prophase, leading to FBXO5/EMI1 ubiquitination and degradation by the proteasome. Acts as a negative regulator of p53 family members: phosphorylates TOPORS, leading to inhibit the sumoylation of p53/TP53 and simultaneously enhance the ubiquitination and subsequent degradation of p53/TP53. Phosphorylates the transactivation domain of the transcription factor p73/TP73, leading to inhibit p73/TP73-mediated transcriptional activation and pro-apoptotic functions. Phosphorylates BORA, and thereby promotes the degradation of BORA. Contributes to the regulation of AURKA function. Also required for recovery after DNA damage checkpoint and entry into mitosis. Phosphorylates MISP, leading to stabilization of cortical and astral microtubule attachments required for proper spindle positioning. Together with MEIKIN, acts as a regulator of kinetochore function during meiosis I: required both for mono-orientation of kinetochores on sister chromosomes and protection of centromeric cohesin from separase-mediated cleavage. Phosphorylates CEP68 and is required for its degradation. Regulates nuclear envelope breakdown during prophase by phosphorylating DCTN1 resulting in its localization in the nuclear envelope. Phosphorylates the heat shock transcription factor HSF1, promoting HSF1 nuclear translocation upon heat shock. Phosphorylates HSF1 also in the early mitotic period; this phosphorylation regulates HSF1 localization to the spindle pole, the recruitment of the SCF(BTRC) ubiquitin ligase complex induicing HSF1 degradation, and hence mitotic progression. Regulates mitotic progression by phosphorylating RIOK2. Through the phosphorylation of DZIP1 regulates the localization during mitosis of the BBSome, a ciliary protein complex involved in cilium biogenesis. Regulates DNA repair during mitosis by mediating phosphorylation of POLQ and RHNO1, thereby promoting POLQ recruitment to DNA damage sites. Phosphorylates ATXN10 which may play a role in the regulation of cytokinesis and may stimulate the proteasome-mediated degradation of ATXN10. The protein is Serine/threonine-protein kinase PLK1 (Plk1) of Mus musculus (Mouse).